Reading from the N-terminus, the 75-residue chain is Small ribosomal subunit protein eS28 (75 aa).

It belongs to the eukaryotic ribosomal protein eS28 family.

This Methanococcus aeolicus (strain ATCC BAA-1280 / DSM 17508 / OCM 812 / Nankai-3) protein is Small ribosomal subunit protein eS28.